Consider the following 159-residue polypeptide: Succinate dehydrogenase [ubiquinone] cytochrome b small subunit, mitochondrial (159 aa).

Residues 1-30 (MLQTRLGLGALRQGRLLFAVKSFSTTSVAK) constitute a mitochondrion transit peptide. Over 31–65 (IFPPPPQTIKGTVNDAAVFPHHSKLHGSYHWDFER) the chain is Mitochondrial matrix. The helical transmembrane segment at 66–82 (IIAIAMVPQVMIPLFTG) threads the bilayer. The Mitochondrial intermembrane portion of the chain corresponds to 83–89 (TSHPLMD). The chain crosses the membrane as a helical span at residues 90–109 (AALACTLITHAHLGFESCVI). His-99 is a binding site for heme. The Mitochondrial matrix portion of the chain corresponds to 110–122 (DYFPARRFKKLSP). Tyr-111 lines the a ubiquinone pocket. Residues 123 to 140 (LMHWILRGCTVLTLIGVY) form a helical membrane-spanning segment. The Mitochondrial intermembrane portion of the chain corresponds to 141–159 (EFNTNDIGLTEGIKKLWKS).

This sequence belongs to the CybS family. Forms part of complex II containing four subunits: a flavoprotein (FP), an iron-sulfur protein (IP) and a cytochrome b composed of a large and a small subunit.

Its subcellular location is the mitochondrion inner membrane. The protein operates within carbohydrate metabolism; tricarboxylic acid cycle. In terms of biological role, membrane-anchoring subunit of succinate dehydrogenase (SDH) that is involved in complex II of the mitochondrial electron transport chain and is responsible for transferring electrons from succinate to ubiquinone (coenzyme Q). This Schizosaccharomyces pombe (strain 972 / ATCC 24843) (Fission yeast) protein is Succinate dehydrogenase [ubiquinone] cytochrome b small subunit, mitochondrial (sdh4).